We begin with the raw amino-acid sequence, 291 residues long: Protease HtpX homolog (291 aa).

Transmembrane regions (helical) follow at residues 11 to 31 and 34 to 54; these read INTF…GLLA and FLGM…ACVQ. His-140 provides a ligand contact to Zn(2+). The active site involves Glu-141. Position 144 (His-144) interacts with Zn(2+). A run of 2 helical transmembrane segments spans residues 155–175 and 186–206; these read IVFG…RALI and AFSF…AMLV. Glu-215 is a binding site for Zn(2+).

Belongs to the peptidase M48B family. Requires Zn(2+) as cofactor.

It is found in the cell membrane. The protein is Protease HtpX homolog of Tropheryma whipplei (strain TW08/27) (Whipple's bacillus).